Reading from the N-terminus, the 436-residue chain is MSDRQQVTNARGERIAIVAGLRTPFAKQATAFHGISALDMGKMVVNELLVRSELDPKLIEQLVYGQVVQMPAAPNIAREIVLGTGMDVSTDAYSVTRACATSFQSAVNVAESIMTGNIEIGIAGGADSSSVLPIGVSKKLAHALVDLNKARTFGQKLQIFRRLGIKDLLPVPPAVAEYSTGLSMGQTAEQMAKTYNISRADQDALAHRSHTLANETWASGHLRDEVMVAHVPPYKQFIERDNNIRENSDLASYAKLRPAFDKKHGSVTAANSTPLTDGASAIILMSEGRAKALGYQPIGYIKSYAFTAIDVWQDMLMGPSYATPLALKRAGMELEDLTLIEMHEAFAAQTLANMQMFASKKFAEEKLGRNRAIGDIDMSKFNVLGGSLAYGHPFAATGTRLITQVCRELKRRGGGTGLATACAAGGLGAAMIVEVE.

The active-site Acyl-thioester intermediate is Cys-99. Active-site proton acceptor residues include His-392 and Cys-422.

The protein belongs to the thiolase-like superfamily. Thiolase family. Heterotetramer of two alpha chains (FadJ) and two beta chains (FadI).

The protein localises to the cytoplasm. It carries out the reaction an acyl-CoA + acetyl-CoA = a 3-oxoacyl-CoA + CoA. Its pathway is lipid metabolism; fatty acid beta-oxidation. In terms of biological role, catalyzes the final step of fatty acid oxidation in which acetyl-CoA is released and the CoA ester of a fatty acid two carbons shorter is formed. This is 3-ketoacyl-CoA thiolase from Shewanella oneidensis (strain ATCC 700550 / JCM 31522 / CIP 106686 / LMG 19005 / NCIMB 14063 / MR-1).